The chain runs to 404 residues: NADH-quinone oxidoreductase subunit D 2 (404 aa).

This sequence belongs to the complex I 49 kDa subunit family. NDH-1 is composed of 14 different subunits. Subunits NuoB, C, D, E, F, and G constitute the peripheral sector of the complex.

Its subcellular location is the cell inner membrane. It carries out the reaction a quinone + NADH + 5 H(+)(in) = a quinol + NAD(+) + 4 H(+)(out). Its function is as follows. NDH-1 shuttles electrons from NADH, via FMN and iron-sulfur (Fe-S) centers, to quinones in the respiratory chain. The immediate electron acceptor for the enzyme in this species is believed to be ubiquinone. Couples the redox reaction to proton translocation (for every two electrons transferred, four hydrogen ions are translocated across the cytoplasmic membrane), and thus conserves the redox energy in a proton gradient. The protein is NADH-quinone oxidoreductase subunit D 2 of Sinorhizobium medicae (strain WSM419) (Ensifer medicae).